The sequence spans 451 residues: DNA double-strand break repair nuclease NurA (451 aa).

Mn(2+)-binding residues include Asp51 and Asp126.

It belongs to the NurA family. In terms of assembly, homodimer. Interacts with HerA. Requires Mn(2+) as cofactor.

Exonuclease activity is stimulated in the presence of HerA. Involved in DNA double-strand break (DSB) repair. Probably acts with HerA to stimulate resection of the 5' strand and produce the long 3' single-strand that is required for RadA loading. Exhibits 5' endonuclease activity and both 5' and 3' exonuclease activities. In Pyrococcus furiosus (strain ATCC 43587 / DSM 3638 / JCM 8422 / Vc1), this protein is DNA double-strand break repair nuclease NurA.